Consider the following 225-residue polypeptide: Small ribosomal subunit protein mS26 (225 aa).

Belongs to the mitochondrion-specific ribosomal protein mS26 family. Component of the mitochondrial ribosome small subunit (28S) which comprises a 12S rRNA and about 30 distinct proteins.

The protein localises to the mitochondrion. The sequence is that of Small ribosomal subunit protein mS26 (mRpS26) from Drosophila melanogaster (Fruit fly).